The chain runs to 73 residues: Defensin-like protein 10 (73 aa).

The signal sequence occupies residues 1-28 (MKLSLRLISALLMSVMLLFATGMGPVEA). 4 disulfide bridges follow: cysteine 31/cysteine 73, cysteine 42/cysteine 62, cysteine 48/cysteine 67, and cysteine 52/cysteine 69.

Belongs to the DEFL family.

The protein resides in the secreted. In terms of biological role, confers broad-spectrum resistance to pathogens. The chain is Defensin-like protein 10 (PDF2.6) from Arabidopsis thaliana (Mouse-ear cress).